A 642-amino-acid polypeptide reads, in one-letter code: Hemagglutinin-esterase-fusion glycoprotein (642 aa).

Residue alanine 1 is a signal peptide. Positions 2-27 (EKIKICLQKQVNSSFSLHNGFGGNLY) are fusion domain-1. Residues 2–617 (EKIKICLQKQ…QSDPFYWGSS (616 aa)) lie on the Extracellular side of the membrane. Disulfide bonds link cysteine 7/cysteine 570, cysteine 107/cysteine 152, cysteine 127/cysteine 175, cysteine 197/cysteine 239, cysteine 216/cysteine 303, cysteine 224/cysteine 276, and cysteine 333/cysteine 339. N-linked (GlcNAc...) asparagine; by host glycans are attached at residues asparagine 13 and asparagine 48. The esterase domain-1 stretch occupies residues 28-138 (ATEEKRMFEL…RKNWTDIKLN (111 aa)). The active-site Nucleophile is serine 58. The N-linked (GlcNAc...) asparagine; by host glycan is linked to asparagine 131. Residues 138–297 (NFQKSIYELA…VRSSPRFLLM (160 aa)) are N-acetyl-9-O-acetylneuraminic acid binding. Positions 298 to 352 (PERSYCFDMKEKGLVTAVQSIWGKGRKSDYAVDQACLSTPGCMLIQKQKPYIGEA) are esterase domain-2. Residues aspartate 353 and histidine 356 each act as charge relay system in the active site. The fusion domain-2 stretch occupies residues 353 to 638 (DDHHGDQEMR…AALVISGIAI (286 aa)). Asparagine 382 carries an N-linked (GlcNAc...) asparagine; by host glycan. The helical transmembrane segment at 618–638 (LGLAITTPISLAALVISGIAI) threads the bilayer. Topologically, residues 639-642 (CRTK) are cytoplasmic.

It belongs to the influenza type C/coronaviruses hemagglutinin-esterase family. Homotrimer of disulfide-linked HEF1-HEF2. In natural infection, inactive HEF is matured into HEF1 and HEF2 outside the cell by one or more trypsin-like, arginine-specific endoprotease.

It localises to the virion membrane. Its subcellular location is the host cell membrane. It catalyses the reaction N-acetyl-9-O-acetylneuraminate + H2O = N-acetylneuraminate + acetate + H(+). It carries out the reaction N-acetyl-4-O-acetylneuraminate + H2O = N-acetylneuraminate + acetate + H(+). In terms of biological role, binds to the N-acetyl-9-O-acetylneuraminic acid residues on the cell surface, bringing about the attachment of the virus particle to the cell. Plays a major role in the determination of host range restriction and virulence. Class I viral fusion protein. Responsible for penetration of the virus into the cell cytoplasm by mediating the fusion of the membrane of the endocytosed virus particle with the endosomal membrane. Low pH in endosomes induce an irreversible conformational change in HEF2, releasing the fusion hydrophobic peptide. Several trimers are required to form a competent fusion pore. Displays a receptor-destroying activity which is a neuraminidate-O-acetyl esterase. This activity cleaves off any receptor on the cell surface, which would otherwise prevent virions release. These cleavages prevent self-aggregation and ensure the efficient spread of the progeny virus from cell to cell. In Influenza C virus (strain C/England/892/1983), this protein is Hemagglutinin-esterase-fusion glycoprotein (HE).